The primary structure comprises 164 residues: CASP-like protein 1C1 (164 aa).

Residues 1–15 (MGDVEIPPLVKQIVR) lie on the Cytoplasmic side of the membrane. A helical membrane pass occupies residues 16 to 36 (GLRGLAFLATILATSFMAASH). Over 37-56 (ERAIFPFDYKADYTDLMLFK) the chain is Extracellular. Residues 57 to 77 (AFLGANIAASLYSFFFVCLPP) form a helical membrane-spanning segment. Over 78–83 (KSLLWR) the chain is Cytoplasmic. A helical membrane pass occupies residues 84 to 104 (LAIVLDVIMFGLLVAMDSAAI). The Extracellular segment spans residues 105 to 132 (AAAYLHKHGDSQAFWPPICSQVPTYCYR). The chain crosses the membrane as a helical span at residues 133-153 (VILAISIGFGGVFMFLLIIII). Residues 154-164 (SISVILNPLLV) are Cytoplasmic-facing.

The protein belongs to the Casparian strip membrane proteins (CASP) family. Homodimer and heterodimers.

Its subcellular location is the cell membrane. The chain is CASP-like protein 1C1 from Populus trichocarpa (Western balsam poplar).